The following is a 195-amino-acid chain: Interferon tau (195 aa).

A signal peptide spans Met1–Gly23. Intrachain disulfides connect Cys24/Cys122 and Cys52/Cys162. N-linked (GlcNAc...) asparagine glycosylation occurs at Asn101.

Belongs to the alpha/beta interferon family. IFN-alphaII subfamily. Constitutively and exclusively expressed in the mononuclear cells of the extraembryonic trophectoderm.

Its subcellular location is the secreted. In terms of biological role, paracrine hormone primarily responsible for maternal recognition of pregnancy. Interacts with endometrial receptors, probably type I interferon receptors, and blocks estrogen receptor expression, preventing the estrogen-induced increase in oxytocin receptor expression in the endometrium. This results in the suppression of the pulsatile endometrial release of the luteolytic hormone prostaglandin F2-alpha, hindering the regression of the corpus luteum (luteolysis) and therefore a return to ovarian cyclicity. This, and a possible direct effect of IFN-tau on prostaglandin synthesis, leads in turn to continued ovarian progesterone secretion, which stimulates the secretion by the endometrium of the nutrients required for the growth of the conceptus. In summary, displays particularly high antiviral and antiproliferative potency concurrently with particular weak cytotoxicity, high antiluteolytic activity and immunomodulatory properties. In contrast with other IFNs, IFN-tau is not virally inducible. The protein is Interferon tau (IFNT) of Ovibos moschatus (Muskox).